Here is a 233-residue protein sequence, read N- to C-terminus: Large ribosomal subunit protein uL1 (233 aa).

The protein belongs to the universal ribosomal protein uL1 family. In terms of assembly, part of the 50S ribosomal subunit.

In terms of biological role, binds directly to 23S rRNA. The L1 stalk is quite mobile in the ribosome, and is involved in E site tRNA release. Protein L1 is also a translational repressor protein, it controls the translation of the L11 operon by binding to its mRNA. This Pelobacter propionicus (strain DSM 2379 / NBRC 103807 / OttBd1) protein is Large ribosomal subunit protein uL1.